The primary structure comprises 490 residues: GTPase Der (490 aa).

EngA-type G domains lie at Pro-3–Val-166 and Ile-203–Thr-376. GTP contacts are provided by residues Gly-9–Ser-16, Asp-56–Ile-60, Asn-118–Asp-121, Gly-209–Ser-216, Asp-256–Val-260, and Asn-321–Asp-324. Residues Arg-377–Glu-461 enclose the KH-like domain.

The protein belongs to the TRAFAC class TrmE-Era-EngA-EngB-Septin-like GTPase superfamily. EngA (Der) GTPase family. Associates with the 50S ribosomal subunit.

Its function is as follows. GTPase that plays an essential role in the late steps of ribosome biogenesis. The polypeptide is GTPase Der (Salmonella enteritidis PT4 (strain P125109)).